Here is a 529-residue protein sequence, read N- to C-terminus: Bifunctional purine biosynthesis protein PurH (529 aa).

Positions 1–148 (MQQRRPVRRA…KNHKDVAIVV (148 aa)) constitute an MGS-like domain. An N6-acetyllysine modification is found at lysine 287.

Belongs to the PurH family.

The catalysed reaction is (6R)-10-formyltetrahydrofolate + 5-amino-1-(5-phospho-beta-D-ribosyl)imidazole-4-carboxamide = 5-formamido-1-(5-phospho-D-ribosyl)imidazole-4-carboxamide + (6S)-5,6,7,8-tetrahydrofolate. The enzyme catalyses IMP + H2O = 5-formamido-1-(5-phospho-D-ribosyl)imidazole-4-carboxamide. It functions in the pathway purine metabolism; IMP biosynthesis via de novo pathway; 5-formamido-1-(5-phospho-D-ribosyl)imidazole-4-carboxamide from 5-amino-1-(5-phospho-D-ribosyl)imidazole-4-carboxamide (10-formyl THF route): step 1/1. It participates in purine metabolism; IMP biosynthesis via de novo pathway; IMP from 5-formamido-1-(5-phospho-D-ribosyl)imidazole-4-carboxamide: step 1/1. This chain is Bifunctional purine biosynthesis protein PurH, found in Escherichia coli O127:H6 (strain E2348/69 / EPEC).